We begin with the raw amino-acid sequence, 183 residues long: Bifunctional protein PyrR (183 aa).

The PRPP-binding signature appears at 98 to 110 (VVLVDDVLYTGRT).

It belongs to the purine/pyrimidine phosphoribosyltransferase family. PyrR subfamily.

It catalyses the reaction UMP + diphosphate = 5-phospho-alpha-D-ribose 1-diphosphate + uracil. Its function is as follows. Regulates the transcription of the pyrimidine nucleotide (pyr) operon in response to exogenous pyrimidines. Functionally, also displays a weak uracil phosphoribosyltransferase activity which is not physiologically significant. This Roseiflexus sp. (strain RS-1) protein is Bifunctional protein PyrR.